A 141-amino-acid polypeptide reads, in one-letter code: Large ribosomal subunit protein bL17 (141 aa).

It belongs to the bacterial ribosomal protein bL17 family. Part of the 50S ribosomal subunit. Contacts protein L32.

The protein is Large ribosomal subunit protein bL17 of Sinorhizobium fredii (strain NBRC 101917 / NGR234).